The chain runs to 560 residues: Interferon alpha/beta receptor 1 (560 aa).

An N-terminal signal peptide occupies residues 1–24 (MLSLLGATTLMLVAGRWVLPAASG). The Extracellular portion of the chain corresponds to 25–437 (EANLKSENVE…EKTKPGNTSK (413 aa)). 2 N-linked (GlcNAc...) asparagine glycosylation sites follow: N47 and N55. C76 and C84 are oxidised to a cystine. N-linked (GlcNAc...) asparagine glycans are attached at residues N85, N108, N109, and N172. 3 Fibronectin type-III domains span residues 126–226 (QIGP…TTER), 231–329 (SPEN…TEVK), and 333–433 (FPPV…TKPG). An intrachain disulfide couples C199 to C220. N222, N285, N313, N359, and N377 each carry an N-linked (GlcNAc...) asparagine glycan. C283 and C291 are oxidised to a cystine. A disulfide bridge connects residues C404 and C427. N434 carries an N-linked (GlcNAc...) asparagine glycan. The chain crosses the membrane as a helical span at residues 438–458 (TWLIAGICTALFSILVVIYVV). At 459–560 (RVFLRCVKYV…SEEFLQQDSV (102 aa)) the chain is on the cytoplasmic side. A lipid anchor (S-palmitoyl cysteine) is attached at C464. 2 positions are modified to phosphotyrosine; by TYK2: Y467 and Y482. The tract at residues 492–501 (LLSTSEEQTE) is important for interaction with TYK2. 2 positions are modified to phosphoserine: S496 and S536. Residues 524–560 (VHEEYNSQASQDSGNYSNEDENSGSKISEEFLQQDSV) form a disordered region. Residues 529–540 (NSQASQDSGNYS) show a composition bias toward polar residues.

This sequence belongs to the type II cytokine receptor family. As to quaternary structure, heterodimer with IFNAR2; forming the receptor for type I interferon. Interacts with TYK2. Interacts with STAT1 and STAT2; the interaction requires its phosphorylation at Tyr-482. Interacts (serine-phosphorylated form) with FBXW11, the substrate recognition component of a SCF (SKP1-CUL1-F-box protein) E3 ubiquitin-protein ligase complex. Interacts with SHMT2; this promotes interaction with ABRAXAS2 and the BRISC complex. Interacts with TRIM10; this interaction prevents association between IFNAR1 and TYK2. Post-translationally, ubiquitinated, leading to its internalization and degradation. Polyubiquitinated via 'Lys-48'-linked and 'Lys-63'-linked ubiquitin chains, leading to receptor internalization and lysosomal degradation. The 'Lys-63'-linked ubiquitin chains are cleaved off by the BRISC complex. Phosphorylated on tyrosine residues in response to interferon-binding: phosphorylation by TYK2 tyrosine kinase creates docking sites for STAT proteins. Phosphorylated on serine residues in response to interferon binding; this promotes interaction with FBXW11 and ubiquitination. In terms of processing, palmitoylation at Cys-464 is required for the activation of STAT1 and STAT2. As to expression, expressed in the endometrium. Expressed in all tissues examined except conceptus at day 15 of pregnancy.

The protein localises to the cell membrane. The protein resides in the late endosome. Its subcellular location is the lysosome. In terms of biological role, together with IFNAR2, forms the heterodimeric receptor for type I interferons (including interferons alpha, beta, epsilon, omega and kappa). Type I interferon binding activates the JAK-STAT signaling cascade, resulting in transcriptional activation or repression of interferon-regulated genes that encode the effectors of the interferon response. Mechanistically, type I interferon-binding brings the IFNAR1 and IFNAR2 subunits into close proximity with one another, driving their associated Janus kinases (JAKs) (TYK2 bound to IFNAR1 and JAK1 bound to IFNAR2) to cross-phosphorylate one another. The activated kinases phosphorylate specific tyrosine residues on the intracellular domains of IFNAR1 and IFNAR2, forming docking sites for the STAT transcription factors. STAT proteins are then phosphorylated by the JAKs, promoting their translocation into the nucleus to regulate expression of interferon-regulated genes. Can also act independently of IFNAR2: form an active IFNB1 receptor by itself and activate a signaling cascade that does not involve activation of the JAK-STAT pathway. The protein is Interferon alpha/beta receptor 1 (IFNAR1) of Ovis aries (Sheep).